Reading from the N-terminus, the 190-residue chain is 3-isopropylmalate dehydratase small subunit (190 aa).

Belongs to the LeuD family. LeuD type 1 subfamily. As to quaternary structure, heterodimer of LeuC and LeuD.

It carries out the reaction (2R,3S)-3-isopropylmalate = (2S)-2-isopropylmalate. The protein operates within amino-acid biosynthesis; L-leucine biosynthesis; L-leucine from 3-methyl-2-oxobutanoate: step 2/4. Catalyzes the isomerization between 2-isopropylmalate and 3-isopropylmalate, via the formation of 2-isopropylmaleate. The chain is 3-isopropylmalate dehydratase small subunit from Staphylococcus aureus (strain JH1).